The primary structure comprises 253 residues: Tryptophan synthase alpha chain (253 aa).

Active-site proton acceptor residues include Glu46 and Asp57.

It belongs to the TrpA family. In terms of assembly, tetramer of two alpha and two beta chains.

The catalysed reaction is (1S,2R)-1-C-(indol-3-yl)glycerol 3-phosphate + L-serine = D-glyceraldehyde 3-phosphate + L-tryptophan + H2O. It functions in the pathway amino-acid biosynthesis; L-tryptophan biosynthesis; L-tryptophan from chorismate: step 5/5. Its function is as follows. The alpha subunit is responsible for the aldol cleavage of indoleglycerol phosphate to indole and glyceraldehyde 3-phosphate. In Dictyoglomus thermophilum (strain ATCC 35947 / DSM 3960 / H-6-12), this protein is Tryptophan synthase alpha chain.